Consider the following 640-residue polypeptide: Auxin efflux carrier component 3 (640 aa).

At 1–7 (MISWHDL) the chain is on the extracellular side. Residues 8-28 (YTVLTAVIPLYVAMILAYGSV) form a helical membrane-spanning segment. Over 29–38 (RWWKIFSPDQ) the chain is Cytoplasmic. A helical membrane pass occupies residues 39 to 59 (CSGINRFVAIFAVPLLSFHFI). Valine 51 is a binding site for (indol-3-yl)acetate. The Extracellular portion of the chain corresponds to 60 to 71 (STNNPYAMNLRF). The helical transmembrane segment at 72 to 92 (IAADTLQKIIMLSLLVLWANF) threads the bilayer. Residues 93–101 (TRSGSLEWS) are Cytoplasmic-facing. Residues 102–122 (ITIFSLSTLPNTLVMGIPLLI) traverse the membrane as a helical segment. Residues asparagine 112 and leucine 114 each coordinate (indol-3-yl)acetate. Residues 123–131 (AMYGEYSGS) lie on the Extracellular side of the membrane. A helical membrane pass occupies residues 132–152 (LMVQIVVLQCIIWYTLLLFLF). Residue tyrosine 145 coordinates (indol-3-yl)acetate. The Cytoplasmic portion of the chain corresponds to 153–500 (EFRGAKMLIM…LIRNPNTYSS (348 aa)). A phosphoserine mark is found at serine 226, serine 243, and serine 283. The disordered stretch occupies residues 310–351 (APNPEFSSTTTSTANKSVNKNPKDVNTNQQTTLPTGGKSNSH). The span at 314–348 (EFSSTTTSTANKSVNKNPKDVNTNQQTTLPTGGKS) shows a compositional bias: polar residues. At threonine 322 the chain carries Phosphothreonine. Serine 366 carries the post-translational modification Phosphoserine. Disordered regions lie at residues 372 to 391 (AGLN…RSDQ) and 404 to 471 (SHNG…SQRK). Basic and acidic residues predominate over residues 430–442 (GKEEEAERPKDAE). Polar residues predominate over residues 449-460 (APNSTAALQSKT). Residues 501–521 (LIGLIWALVAFRWHVAMPKII) form a helical membrane-spanning segment. Over 522–524 (QQS) the chain is Extracellular. The chain crosses the membrane as a helical span at residues 525–545 (ISILSDAGLGMAMFSLGLFMA). Over 546–559 (LQPKLIACGNSVAT) the chain is Cytoplasmic. Residues 560 to 580 (FAMAVRFLTGPAVMAVAAIAI) traverse the membrane as a helical segment. The Extracellular segment spans residues 581–585 (GLRGD). A helical membrane pass occupies residues 586–606 (LLRVAIVQAALPQGIVPFVFA). 2 residues coordinate (indol-3-yl)acetate: isoleucine 600 and valine 601. Topologically, residues 607–619 (KEYNVHPAILSTG) are cytoplasmic. Residues 620-640 (VIFGMLIALPITLVYYILLGL) traverse the membrane as a helical segment.

Belongs to the auxin efflux carrier (TC 2.A.69.1) family. As to quaternary structure, homodimer. In terms of tissue distribution, predominantly expressed at the lateral side of shoot endodermis cells as well as root pericycle and columella cells.

The protein localises to the cell membrane. Its activity is regulated as follows. Auxin efflux carrier activity is competitively inhibited by naptalamate (N-1-naphthylphthalamic acid, NPA). In terms of biological role, acts as a component of the auxin efflux carrier; this activity is enhanced when activated by PID-mediated phosphorylation. Seems to be involved in the lateral auxin transport system. Together with PIN4 and PIN7, involved in the connective auxin transport (CAT) that ensures communication across the shoot system, and modulates strigolactone-mediated shoot branching control. Binds auxins including indole-3-acetic acid (IAA). Coordinated polar localization of PIN3 is directly regulated by the vesicle trafficking process. The chain is Auxin efflux carrier component 3 from Arabidopsis thaliana (Mouse-ear cress).